We begin with the raw amino-acid sequence, 186 residues long: Ribosome-recycling factor (186 aa).

It belongs to the RRF family.

The protein localises to the cytoplasm. In terms of biological role, responsible for the release of ribosomes from messenger RNA at the termination of protein biosynthesis. May increase the efficiency of translation by recycling ribosomes from one round of translation to another. This Endomicrobium trichonymphae protein is Ribosome-recycling factor.